Consider the following 297-residue polypeptide: GTPase Era (297 aa).

Residues 5 to 173 (RAGFVSFVGR…TTELMRLLPV (169 aa)) form the Era-type G domain. The tract at residues 13–20 (GRPNVGKS) is G1. Position 13–20 (13–20 (GRPNVGKS)) interacts with GTP. The tract at residues 39–43 (QTTRR) is G2. The interval 60 to 63 (DTPG) is G3. Residues 60 to 64 (DTPGV) and 123 to 126 (TKID) each bind GTP. Residues 123-126 (TKID) form a G4 region. A G5 region spans residues 152–154 (VSA). Residues 205–283 (VEDELPHSLA…FLSIRVKVAK (79 aa)) enclose the KH type-2 domain.

Belongs to the TRAFAC class TrmE-Era-EngA-EngB-Septin-like GTPase superfamily. Era GTPase family. As to quaternary structure, monomer.

It localises to the cytoplasm. It is found in the cell membrane. Functionally, an essential GTPase that binds both GDP and GTP, with rapid nucleotide exchange. Plays a role in 16S rRNA processing and 30S ribosomal subunit biogenesis and possibly also in cell cycle regulation and energy metabolism. The chain is GTPase Era from Leifsonia xyli subsp. xyli (strain CTCB07).